The chain runs to 156 residues: Small ribosomal subunit protein uS7 (156 aa).

The protein belongs to the universal ribosomal protein uS7 family. Part of the 30S ribosomal subunit. Contacts proteins S9 and S11.

Functionally, one of the primary rRNA binding proteins, it binds directly to 16S rRNA where it nucleates assembly of the head domain of the 30S subunit. Is located at the subunit interface close to the decoding center, probably blocks exit of the E-site tRNA. This Acholeplasma laidlawii (strain PG-8A) protein is Small ribosomal subunit protein uS7.